The primary structure comprises 335 residues: Glyceraldehyde-3-phosphate dehydrogenase, cytosolic (335 aa).

Residues 13–14 (RI), Asp-35, and Arg-80 contribute to the NAD(+) site. Residues 151 to 153 (SCT), Thr-182, 211 to 212 (TG), and Arg-234 contribute to the D-glyceraldehyde 3-phosphate site. Cys-152 acts as the Nucleophile in catalysis. Asn-316 lines the NAD(+) pocket.

It belongs to the glyceraldehyde-3-phosphate dehydrogenase family. Homotetramer.

The protein localises to the cytoplasm. It catalyses the reaction D-glyceraldehyde 3-phosphate + phosphate + NAD(+) = (2R)-3-phospho-glyceroyl phosphate + NADH + H(+). Its pathway is carbohydrate degradation; glycolysis; pyruvate from D-glyceraldehyde 3-phosphate: step 1/5. In Gracilaria gracilis (Red alga), this protein is Glyceraldehyde-3-phosphate dehydrogenase, cytosolic (GAPC).